Here is a 168-residue protein sequence, read N- to C-terminus: Large ribosomal subunit protein bL17 (168 aa).

Basic and acidic residues predominate over residues 121-146 (AEAEGGEEKAEQKTEKKAAKAKEPKA). Positions 121–168 (AEAEGGEEKAEQKTEKKAAKAKEPKAAKAPKKAAAKPKAKAEKKGAEE) are disordered. Basic residues predominate over residues 148 to 158 (KAPKKAAAKPK). The span at 159–168 (AKAEKKGAEE) shows a compositional bias: basic and acidic residues.

This sequence belongs to the bacterial ribosomal protein bL17 family. As to quaternary structure, part of the 50S ribosomal subunit. Contacts protein L32.

In Anaeromyxobacter sp. (strain Fw109-5), this protein is Large ribosomal subunit protein bL17.